The sequence spans 187 residues: Orotate phosphoribosyltransferase (187 aa).

Residues arginine 98, lysine 99, lysine 102, histidine 104, and 128 to 136 contribute to the 5-phospho-alpha-D-ribose 1-diphosphate site; that span reads EDVTTTGGS. Orotate contacts are provided by threonine 132 and arginine 160.

This sequence belongs to the purine/pyrimidine phosphoribosyltransferase family. PyrE subfamily. As to quaternary structure, homodimer. Mg(2+) is required as a cofactor.

It catalyses the reaction orotidine 5'-phosphate + diphosphate = orotate + 5-phospho-alpha-D-ribose 1-diphosphate. The protein operates within pyrimidine metabolism; UMP biosynthesis via de novo pathway; UMP from orotate: step 1/2. Catalyzes the transfer of a ribosyl phosphate group from 5-phosphoribose 1-diphosphate to orotate, leading to the formation of orotidine monophosphate (OMP). The polypeptide is Orotate phosphoribosyltransferase (Rhodopseudomonas palustris (strain ATCC BAA-98 / CGA009)).